Here is a 454-residue protein sequence, read N- to C-terminus: Phosphoglucosamine mutase (454 aa).

The Phosphoserine intermediate role is filled by serine 101. The Mg(2+) site is built by serine 101, aspartate 243, aspartate 245, and aspartate 247. Serine 101 is modified (phosphoserine).

This sequence belongs to the phosphohexose mutase family. Mg(2+) serves as cofactor. In terms of processing, activated by phosphorylation.

The enzyme catalyses alpha-D-glucosamine 1-phosphate = D-glucosamine 6-phosphate. Its function is as follows. Catalyzes the conversion of glucosamine-6-phosphate to glucosamine-1-phosphate. The chain is Phosphoglucosamine mutase from Geotalea uraniireducens (strain Rf4) (Geobacter uraniireducens).